We begin with the raw amino-acid sequence, 138 residues long: Acidic phospholipase A2 RV-7 (138 aa).

The signal sequence occupies residues 1–16; the sequence is MRTLWIVAVCLIGVEG. 7 disulfides stabilise this stretch: C42/C131, C44/C60, C59/C111, C65/C138, C66/C104, C73/C97, and C91/C102. Residues Y43, G45, and G47 each contribute to the Ca(2+) site. Residue H63 is part of the active site. D64 lines the Ca(2+) pocket. The active site involves D105.

The protein belongs to the phospholipase A2 family. Group II subfamily. D49 sub-subfamily. As to quaternary structure, heterodimer of a weakly toxic basic protein having phospholipase A2 activity (RV-4) and a non-toxic acidic protein which inhibits its enzymatic activity but potentiates its lethal potency and neurotoxicity (RV-7). The cofactor is Ca(2+). In terms of tissue distribution, expressed by the venom gland.

It localises to the secreted. It carries out the reaction a 1,2-diacyl-sn-glycero-3-phosphocholine + H2O = a 1-acyl-sn-glycero-3-phosphocholine + a fatty acid + H(+). Heterodimer: RV-4/RV-7 targets the presynaptic sites of the neuromuscular junction. In terms of biological role, monomer: snake venom phospholipase A2 (PLA2) RV-7 that has low enzymatic activity and is not toxic. It inhibits the enzymatic activity of RV-4 in vitro but potentiates its lethal potency and neurotoxicity. It may facilitate the specific binding of RV-4 to its presynaptic binding sites, probably by acting as a chaperone, minimizing distraction and destruction of RV-4 en route to the site of action by reducing non-specific binding to muscle and other organs. PLA2 catalyzes the calcium-dependent hydrolysis of the 2-acyl groups in 3-sn-phosphoglycerides. This is Acidic phospholipase A2 RV-7 from Daboia siamensis (Eastern Russel's viper).